Reading from the N-terminus, the 371-residue chain is Queuine tRNA-ribosyltransferase (371 aa).

Asp90 (proton acceptor) is an active-site residue. Residues 90–94, Asp144, Gln188, and Gly215 contribute to the substrate site; that span reads DSGGF. The tract at residues 246-252 is RNA binding; that stretch reads GVGTPED. The active-site Nucleophile is the Asp265. Residues 270 to 274 are RNA binding; important for wobble base 34 recognition; sequence TRNAR. Residues Cys303, Cys305, Cys308, and His334 each contribute to the Zn(2+) site.

The protein belongs to the queuine tRNA-ribosyltransferase family. In terms of assembly, homodimer. Within each dimer, one monomer is responsible for RNA recognition and catalysis, while the other monomer binds to the replacement base PreQ1. Zn(2+) serves as cofactor.

It carries out the reaction 7-aminomethyl-7-carbaguanine + guanosine(34) in tRNA = 7-aminomethyl-7-carbaguanosine(34) in tRNA + guanine. Its pathway is tRNA modification; tRNA-queuosine biosynthesis. In terms of biological role, catalyzes the base-exchange of a guanine (G) residue with the queuine precursor 7-aminomethyl-7-deazaguanine (PreQ1) at position 34 (anticodon wobble position) in tRNAs with GU(N) anticodons (tRNA-Asp, -Asn, -His and -Tyr). Catalysis occurs through a double-displacement mechanism. The nucleophile active site attacks the C1' of nucleotide 34 to detach the guanine base from the RNA, forming a covalent enzyme-RNA intermediate. The proton acceptor active site deprotonates the incoming PreQ1, allowing a nucleophilic attack on the C1' of the ribose to form the product. After dissociation, two additional enzymatic reactions on the tRNA convert PreQ1 to queuine (Q), resulting in the hypermodified nucleoside queuosine (7-(((4,5-cis-dihydroxy-2-cyclopenten-1-yl)amino)methyl)-7-deazaguanosine). In Neisseria meningitidis serogroup B (strain ATCC BAA-335 / MC58), this protein is Queuine tRNA-ribosyltransferase.